Consider the following 1349-residue polypeptide: Protein turtle homolog B (1349 aa).

Residues 1 to 20 form the signal peptide; sequence MIWYVATFIASVIGTRGLAA. Residues 21–722 lie on the Extracellular side of the membrane; that stretch reads EGAHGLREEP…DLTEDGLARP (702 aa). 5 consecutive Ig-like domains span residues 24–129, 139–226, 228–320, 324–415, and 420–504; these read HGLR…HNGS, PTFT…LLVQ, PPFI…AYLT, PARV…ARLV, and PYFT…THLT. Cystine bridges form between C45/C113 and C161/C208. 2 N-linked (GlcNAc...) asparagine glycosylation sites follow: N241 and N258. Disulfide bonds link C250–C303, C346–C397, and C442–C488. 2 Fibronectin type-III domains span residues 512 to 604 and 614 to 708; these read APGS…TLAF and LVTP…STDI. N624 is a glycosylation site (N-linked (GlcNAc...) asparagine). Residues 723 to 743 form a helical membrane-spanning segment; the sequence is VLAGIVATICFLAAAILFSTL. Residues 744 to 1349 lie on the Cytoplasmic side of the membrane; sequence AACFVNKQRK…SPPERALSKL (606 aa). Disordered regions lie at residues 758-817, 911-1081, and 1099-1349; these read RKKD…EKEL, QLTP…RGLP, and APKG…LSKL. Phosphoserine is present on residues S775, S783, and S794. The segment covering 911–921 has biased composition (polar residues); sequence QLTPLSSSQES. The segment covering 985-998 has biased composition (low complexity); sequence VPEVGSPLSSVMSS. Composition is skewed to polar residues over residues 1018-1033, 1129-1141, and 1199-1214; these read ENASNSTLPLTQTPTG, LVSQGQLRHTSQG, and SRLSPLTQSPLSSRTG. R1136 carries the post-translational modification Omega-N-methylarginine. 2 positions are modified to phosphoserine: S1207 and S1215. Residues 1251-1271 are compositionally biased toward low complexity; that stretch reads STPSTGSPSQSSRSGSPSYRP. Over residues 1283–1292 the composition is skewed to pro residues; that stretch reads PSPPPGPAPA.

This sequence belongs to the immunoglobulin superfamily. Turtle family. In terms of assembly, found in a complex with MAGI2 and NLGN2, where it interacts with MAGI2 (via PDZ 5 and PDZ 6 domains). Post-translationally, N-glycosylated and sialylated. Not significantly O-glycosylated.

It is found in the postsynaptic cell membrane. The protein resides in the postsynaptic density. Transmembrane protein which is abundantly expressed in interneurons, where it may regulate inhibitory synapse development. May mediate homophilic cell adhesion. In Homo sapiens (Human), this protein is Protein turtle homolog B (IGSF9B).